The primary structure comprises 313 residues: tRNA-cytidine(32) 2-sulfurtransferase (313 aa).

The PP-loop motif signature appears at Ser-60–Ser-65. The [4Fe-4S] cluster site is built by Cys-135, Cys-138, and Cys-226.

The protein belongs to the TtcA family. In terms of assembly, homodimer. Mg(2+) is required as a cofactor. [4Fe-4S] cluster serves as cofactor.

The protein resides in the cytoplasm. It catalyses the reaction cytidine(32) in tRNA + S-sulfanyl-L-cysteinyl-[cysteine desulfurase] + AH2 + ATP = 2-thiocytidine(32) in tRNA + L-cysteinyl-[cysteine desulfurase] + A + AMP + diphosphate + H(+). Its pathway is tRNA modification. Catalyzes the ATP-dependent 2-thiolation of cytidine in position 32 of tRNA, to form 2-thiocytidine (s(2)C32). The sulfur atoms are provided by the cysteine/cysteine desulfurase (IscS) system. The chain is tRNA-cytidine(32) 2-sulfurtransferase from Delftia acidovorans (strain DSM 14801 / SPH-1).